The chain runs to 299 residues: Probable lipid kinase YegS (299 aa).

The DAGKc domain maps to 2-133; sequence AEFPASLLIL…IDMAQVNKQT (132 aa). ATP is bound by residues T40, 66–72, and T95; that span reads GDGTINE. Mg(2+) contacts are provided by L215, D218, and L220. E271 (proton acceptor) is an active-site residue.

It belongs to the diacylglycerol/lipid kinase family. YegS lipid kinase subfamily. It depends on Mg(2+) as a cofactor. Requires Ca(2+) as cofactor.

The protein localises to the cytoplasm. Its function is as follows. Probably phosphorylates lipids; the in vivo substrate is unknown. In Escherichia coli (strain K12 / MC4100 / BW2952), this protein is Probable lipid kinase YegS.